The sequence spans 459 residues: Protein YTP1 (459 aa).

The Extracellular segment spans residues 1 to 6 (MTAANK). Residues 7–27 (NIVFGFSRSISAILLICFFFE) form a helical membrane-spanning segment. At 28-59 (KVCGDMEHDMGMDDTSGYTRPEIVQAGSKSFH) the chain is on the cytoplasmic side. A helical transmembrane segment spans residues 60 to 80 (WLCTLGFLLLLPSVVTCLSFA). At 81–82 (GR) the chain is on the extracellular side. Residues 83-103 (IYSATLLQCTCAVYAFLEAAV) traverse the membrane as a helical segment. The Cytoplasmic portion of the chain corresponds to 104 to 122 (LRFQDNDGVENRTSRGTAW). A helical membrane pass occupies residues 123-143 (FLVGLTWITLFFGGLAGGTGF). Residues 144-170 (LVKSKRLQTFISNAGEKRLSYIHRGLS) are Extracellular-facing. The chain crosses the membrane as a helical span at residues 171–191 (FLTVLTGWVKVCLAPVALFGF). Residues 192–205 (CREAHTGQCIAHGI) are Cytoplasmic-facing. Residues 206–226 (MGSAFVLYGFIYVLVLVIPWI) traverse the membrane as a helical segment. Over 227–266 (RSAQTSYSQDYVDSWVMCIWGVVNTFTEHRWGREGWSVHD) the chain is Extracellular. The chain crosses the membrane as a helical span at residues 267–287 (YQHTFMGIIWWTGGILGIFLS). Residues 288–295 (RNGRRTFV) are Cytoplasmic-facing. A helical transmembrane segment spans residues 296-316 (PSLIIIFTGWAMSEHAQHLII). At 317–322 (STKVHN) the chain is on the extracellular side. A helical transmembrane segment spans residues 323–343 (MFGLVLMCGGALRIIEISFLL). Topologically, residues 344–351 (RDKRTLDK) are cytoplasmic. A helical membrane pass occupies residues 352-372 (IHSFQYLAPFCLVCSGLLFMG). Residues 373 to 389 (ANEEQLILVLRLGGDHS) are Extracellular-facing. A helical transmembrane segment spans residues 390–410 (AYVLIIVSGAFLVYFWMIACL). The Cytoplasmic portion of the chain corresponds to 411–459 (EFYLYLLEKGKQGFLPKSYELEEENNNVSFELDNISNEDVDEDTTPFNV).

The protein localises to the membrane. This Saccharomyces cerevisiae (strain ATCC 204508 / S288c) (Baker's yeast) protein is Protein YTP1 (YTP1).